An 89-amino-acid polypeptide reads, in one-letter code: MLEHELTVTNKLGLHARATAKLVQTMSKFQSNTTLSTKGREVNAKSIMGVMLLAASQGTVIRVRIDGEDEHTAMQALSELFENRFNEDT.

Residues 1 to 88 (MLEHELTVTN…ELFENRFNED (88 aa)) form the HPr domain. Residue His-15 is the Pros-phosphohistidine intermediate of the active site. A Phosphoserine; by HPrK/P modification is found at Ser-46.

Belongs to the HPr family.

Its subcellular location is the cytoplasm. Its activity is regulated as follows. Phosphorylation on Ser-46 inhibits the phosphoryl transfer from enzyme I to HPr. Functionally, general (non sugar-specific) component of the phosphoenolpyruvate-dependent sugar phosphotransferase system (sugar PTS). This major carbohydrate active-transport system catalyzes the phosphorylation of incoming sugar substrates concomitantly with their translocation across the cell membrane. The phosphoryl group from phosphoenolpyruvate (PEP) is transferred to the phosphoryl carrier protein HPr by enzyme I. Phospho-HPr then transfers it to the PTS EIIA domain. The sequence is that of Phosphocarrier protein HPr (ptsH) from Xylella fastidiosa (strain Temecula1 / ATCC 700964).